A 712-amino-acid polypeptide reads, in one-letter code: Polyribonucleotide nucleotidyltransferase (712 aa).

Residues Asp484 and Asp490 each coordinate Mg(2+). The region spanning 551–610 is the KH domain; that stretch reads PKVFTIQIHPDKIRDIIGPGGKVIRAIQAETGTRVDVDDSGLVKVSAVNLEEGEAALQMI. An S1 motif domain is found at 620-688; it reads GAVYEGTVVK…KDGKIRLSRK (69 aa). A disordered region spans residues 689–712; the sequence is ALLEEENGKSGPENGAPQRDKNRH.

This sequence belongs to the polyribonucleotide nucleotidyltransferase family. Mg(2+) is required as a cofactor.

It is found in the cytoplasm. The enzyme catalyses RNA(n+1) + phosphate = RNA(n) + a ribonucleoside 5'-diphosphate. In terms of biological role, involved in mRNA degradation. Catalyzes the phosphorolysis of single-stranded polyribonucleotides processively in the 3'- to 5'-direction. This Desulfatibacillum aliphaticivorans protein is Polyribonucleotide nucleotidyltransferase.